The sequence spans 1026 residues: Chromodomain-helicase-DNA-binding protein 1-like (1026 aa).

A Helicase ATP-binding domain is found at 47–212 (SLCMKNQQGC…YSLLTFIQPS (166 aa)). 60-67 (DEMGLGKT) contributes to the ATP binding site. A DEAH box motif is present at residues 163–166 (DEAH). The Helicase C-terminal domain occupies 340 to 494 (LLDSMLAYLQ…EGRFSLLDQA (155 aa)). The stretch at 540-668 (LTDEEHAKLN…EELNYKKKMA (129 aa)) forms a coiled coil. A regulatory linker segment (RLS) region spans residues 594–628 (AEMEDAEKEGRALRNKAGVSLSGPLINPARKKRPL). The segment at 606–655 (LRNKAGVSLSGPLINPARKKRPLTEAELEERRQKRQAAAAKRAKLQEERK) is disordered. The required for ATPase activity stretch occupies residues 608–666 (NKAGVSLSGPLINPARKKRPLTEAELEERRQKRQAAAAKRAKLQEERKKQQEELNYKKK). Residues 697 to 870 (HVSFSSTDSD…IFTSIYYYRR (174 aa)) form the Macro domain. Residues 877 to 907 (VSSTASTTTPSSSKPAASSPSESPHSSSPPA) are compositionally biased toward low complexity. The tract at residues 877–929 (VSSTASTTTPSSSKPAASSPSESPHSSSPPANREGLTKSAELSTTSHEGPGAP) is disordered. A BRCT domain is found at 930–1023 (GLADFMRGVH…RKVSVSKYVI (94 aa)).

Belongs to the SNF2/RAD54 helicase family. Interacts with nucleosomes; interacts with the acidic patch of histones.

It is found in the nucleus. The protein localises to the chromosome. It catalyses the reaction ATP + H2O = ADP + phosphate + H(+). Adopts an inactive conformation in absence of DNA damage. Binding to poly-ADP-ribosylated histones activates the ATP-dependent chromatin remodeler activity. ATP-dependent chromatin remodeler that mediates chromatin-remodeling following DNA damage. Recruited to DNA damage sites through interaction with poly-ADP-ribose: specifically recognizes and binds histones that are poly-ADP-ribosylated on serine residues in response to DNA damage. Poly-ADP-ribose-binding activates the ATP-dependent chromatin remodeler activity, thereby regulating chromatin during DNA repair. Catalyzes nucleosome sliding away from DNA breaks in an ATP-dependent manner. The polypeptide is Chromodomain-helicase-DNA-binding protein 1-like (chd1l) (Danio rerio (Zebrafish)).